The sequence spans 300 residues: Junctional adhesion molecule A (300 aa).

The signal sequence occupies residues 1–26 (MGTEGKAGRKLLFLFTSMILGSLVQG). Residues 27-238 (KGSVYTAQSD…MDAVELNVGG (212 aa)) lie on the Extracellular side of the membrane. 2 consecutive Ig-like V-type domains span residues 28–122 (GSVY…GEVS) and 134–230 (PTIS…AHMD). N-linked (GlcNAc...) asparagine glycosylation is present at Asn-42. 2 disulfide bridges follow: Cys-49/Cys-108 and Cys-152/Cys-212. Asn-185 is a glycosylation site (N-linked (GlcNAc...) asparagine). The helical transmembrane segment at 239–259 (IVAAVLVTLILLGLLIFGVWF) threads the bilayer. Over 260–299 (AYSRGYFERTKKGTAPGKKVIYSQPSTRSEGEFKQTSSFL) the chain is Cytoplasmic. Phosphoserine is present on residues Ser-282, Ser-285, and Ser-288.

This sequence belongs to the immunoglobulin superfamily. Interacts with the ninth PDZ domain of MPDZ. Interacts with the first PDZ domain of PARD3. The association between PARD3 and PARD6B probably disrupts this interaction. Interacts with ITGAL (via I-domain). Interacts with CD151.

The protein localises to the cell junction. It localises to the tight junction. It is found in the cell membrane. Functionally, seems to play a role in epithelial tight junction formation. Appears early in primordial forms of cell junctions and recruits PARD3. The association of the PARD6-PARD3 complex may prevent the interaction of PARD3 with JAM1, thereby preventing tight junction assembly. Plays a role in regulating monocyte transmigration involved in integrity of epithelial barrier. Ligand for integrin alpha-L/beta-2 involved in memory T-cell and neutrophil transmigration. Involved in platelet activation. This Mus musculus (Mouse) protein is Junctional adhesion molecule A (F11r).